Consider the following 822-residue polypeptide: ATP-dependent zinc metalloprotease FTSH 8, mitochondrial (822 aa).

A compositionally biased stretch (low complexity) spans 1-25; it reads MSLASLARALSRRSAPSSSRARQGF. 3 disordered regions span residues 1–50, 103–131, and 202–221; these read MSLA…LHGG, NYYPKGKKEAPKGDGSNKSDSKQDSSTDD, and SSPQSNSQGQNTDAIITTND. The transit peptide at 1 to 93 directs the protein to the mitochondrion; sequence MSLASLARAL…LANPQFRRLF (93 aa). The span at 108-127 shows a compositional bias: basic and acidic residues; the sequence is GKKEAPKGDGSNKSDSKQDS. 375 to 382 contacts ATP; it reads GPPGTGKT. His600 contacts Zn(2+). Residue Glu601 is part of the active site. Zn(2+) is bound by residues His604 and Asp676. Residues 781-822 are disordered; it reads PTNYDLFKQGFQDEEDSKNQEAAKTPQPDDDGTPSLGEVVPT.

In the N-terminal section; belongs to the AAA ATPase family. It in the C-terminal section; belongs to the peptidase M41 family. The cofactor is Zn(2+).

The protein resides in the mitochondrion. In terms of biological role, probable ATP-dependent zinc metallopeptidase. This chain is ATP-dependent zinc metalloprotease FTSH 8, mitochondrial (FTSH8), found in Oryza sativa subsp. japonica (Rice).